A 331-amino-acid chain; its full sequence is Uroporphyrinogen decarboxylase (331 aa).

Residues 22 to 26, D71, Y145, S199, and H308 each bind substrate; that span reads RQAGR.

The protein belongs to the uroporphyrinogen decarboxylase family. Homodimer.

It localises to the cytoplasm. It catalyses the reaction uroporphyrinogen III + 4 H(+) = coproporphyrinogen III + 4 CO2. It functions in the pathway porphyrin-containing compound metabolism; protoporphyrin-IX biosynthesis; coproporphyrinogen-III from 5-aminolevulinate: step 4/4. Catalyzes the decarboxylation of four acetate groups of uroporphyrinogen-III to yield coproporphyrinogen-III. This chain is Uroporphyrinogen decarboxylase, found in Picrophilus torridus (strain ATCC 700027 / DSM 9790 / JCM 10055 / NBRC 100828 / KAW 2/3).